The chain runs to 205 residues: Thiamine-phosphate synthase (205 aa).

4-amino-2-methyl-5-(diphosphooxymethyl)pyrimidine is bound by residues 34–38 and asparagine 66; that span reads QLRCK. Aspartate 67 and aspartate 86 together coordinate Mg(2+). Serine 105 lines the 4-amino-2-methyl-5-(diphosphooxymethyl)pyrimidine pocket. Position 131-133 (131-133) interacts with 2-[(2R,5Z)-2-carboxy-4-methylthiazol-5(2H)-ylidene]ethyl phosphate; it reads TTT. Position 134 (lysine 134) interacts with 4-amino-2-methyl-5-(diphosphooxymethyl)pyrimidine. A 2-[(2R,5Z)-2-carboxy-4-methylthiazol-5(2H)-ylidene]ethyl phosphate-binding site is contributed by glycine 163.

It belongs to the thiamine-phosphate synthase family. Requires Mg(2+) as cofactor.

It catalyses the reaction 2-[(2R,5Z)-2-carboxy-4-methylthiazol-5(2H)-ylidene]ethyl phosphate + 4-amino-2-methyl-5-(diphosphooxymethyl)pyrimidine + 2 H(+) = thiamine phosphate + CO2 + diphosphate. The enzyme catalyses 2-(2-carboxy-4-methylthiazol-5-yl)ethyl phosphate + 4-amino-2-methyl-5-(diphosphooxymethyl)pyrimidine + 2 H(+) = thiamine phosphate + CO2 + diphosphate. The catalysed reaction is 4-methyl-5-(2-phosphooxyethyl)-thiazole + 4-amino-2-methyl-5-(diphosphooxymethyl)pyrimidine + H(+) = thiamine phosphate + diphosphate. Its pathway is cofactor biosynthesis; thiamine diphosphate biosynthesis; thiamine phosphate from 4-amino-2-methyl-5-diphosphomethylpyrimidine and 4-methyl-5-(2-phosphoethyl)-thiazole: step 1/1. Condenses 4-methyl-5-(beta-hydroxyethyl)thiazole monophosphate (THZ-P) and 2-methyl-4-amino-5-hydroxymethyl pyrimidine pyrophosphate (HMP-PP) to form thiamine monophosphate (TMP). The polypeptide is Thiamine-phosphate synthase (Neisseria gonorrhoeae (strain ATCC 700825 / FA 1090)).